Here is a 147-residue protein sequence, read N- to C-terminus: Endothelial differentiation-related factor 1 homolog (147 aa).

The segment at 1-69 (MAESDWDTVT…KLDRETEELH (69 aa)) is disordered. The segment covering 33–42 (RRGEEVETSK) has biased composition (basic and acidic residues). The segment covering 46–58 (AGQNKQHTITRNT) has biased composition (polar residues). The segment covering 59–69 (AKLDRETEELH) has biased composition (basic and acidic residues). The region spanning 81–135 (IQQGRQGKGMTQKDLATKINEKPQVIADYECGKAIPNNQVMGKIERVIGLKLRGK) is the HTH cro/C1-type domain. Residues 92–111 (QKDLATKINEKPQVIADYEC) constitute a DNA-binding region (H-T-H motif).

It localises to the nucleus. In terms of biological role, probable transcriptional coactivator. The sequence is that of Endothelial differentiation-related factor 1 homolog (edf1) from Xenopus laevis (African clawed frog).